The sequence spans 461 residues: Photosystem II CP43 reaction center protein (461 aa).

The propeptide occupies 1-2; the sequence is ME. Thr-3 is modified (N-acetylthreonine). Thr-3 is modified (phosphothreonine). Helical transmembrane passes span 57 to 81, 122 to 143, 166 to 188, 243 to 263, and 279 to 300; these read LFEV…PHIA, LIGP…KDKN, KAMY…RVIT, TPWP…LSYS, and WFNN…ASQS. Glu-355 contacts [CaMn4O5] cluster. A helical membrane pass occupies residues 435–459; that stretch reads RARAAAAGFEKGIDRFDEPVLSMRP.

Belongs to the PsbB/PsbC family. PsbC subfamily. PSII is composed of 1 copy each of membrane proteins PsbA, PsbB, PsbC, PsbD, PsbE, PsbF, PsbH, PsbI, PsbJ, PsbK, PsbL, PsbM, PsbT, PsbX, PsbY, PsbZ, Psb30/Ycf12, at least 3 peripheral proteins of the oxygen-evolving complex and a large number of cofactors. It forms dimeric complexes. Binds multiple chlorophylls and provides some of the ligands for the Ca-4Mn-5O cluster of the oxygen-evolving complex. It may also provide a ligand for a Cl- that is required for oxygen evolution. PSII binds additional chlorophylls, carotenoids and specific lipids. is required as a cofactor. Phosphorylated in vitro.

Its subcellular location is the plastid. It localises to the chloroplast thylakoid membrane. Functionally, one of the components of the core complex of photosystem II (PSII). It binds chlorophyll and helps catalyze the primary light-induced photochemical processes of PSII. PSII is a light-driven water:plastoquinone oxidoreductase, using light energy to abstract electrons from H(2)O, generating O(2) and a proton gradient subsequently used for ATP formation. This is Photosystem II CP43 reaction center protein from Chlamydomonas reinhardtii (Chlamydomonas smithii).